The following is a 359-amino-acid chain: Phosphoserine aminotransferase (359 aa).

Arginine 41 contributes to the L-glutamate binding site. Residues 75 to 76 (AS), tryptophan 99, threonine 147, aspartate 166, and glutamine 189 each bind pyridoxal 5'-phosphate. The residue at position 190 (lysine 190) is an N6-(pyridoxal phosphate)lysine. Position 231–232 (231–232 (NT)) interacts with pyridoxal 5'-phosphate.

The protein belongs to the class-V pyridoxal-phosphate-dependent aminotransferase family. SerC subfamily. As to quaternary structure, homodimer. It depends on pyridoxal 5'-phosphate as a cofactor.

The protein localises to the cytoplasm. It catalyses the reaction O-phospho-L-serine + 2-oxoglutarate = 3-phosphooxypyruvate + L-glutamate. It carries out the reaction 4-(phosphooxy)-L-threonine + 2-oxoglutarate = (R)-3-hydroxy-2-oxo-4-phosphooxybutanoate + L-glutamate. Its pathway is amino-acid biosynthesis; L-serine biosynthesis; L-serine from 3-phospho-D-glycerate: step 2/3. The protein operates within cofactor biosynthesis; pyridoxine 5'-phosphate biosynthesis; pyridoxine 5'-phosphate from D-erythrose 4-phosphate: step 3/5. Catalyzes the reversible conversion of 3-phosphohydroxypyruvate to phosphoserine and of 3-hydroxy-2-oxo-4-phosphonooxybutanoate to phosphohydroxythreonine. This chain is Phosphoserine aminotransferase, found in Azobacteroides pseudotrichonymphae genomovar. CFP2.